The chain runs to 134 residues: Small ribosomal subunit protein uS9 (134 aa).

A disordered region spans residues 109–134; it reads DARRTEPHKPSKSTKGPRAKRQKSYR. Over residues 118-134 the composition is skewed to basic residues; it reads PSKSTKGPRAKRQKSYR.

It belongs to the universal ribosomal protein uS9 family.

The chain is Small ribosomal subunit protein uS9 from Methanococcus aeolicus (strain ATCC BAA-1280 / DSM 17508 / OCM 812 / Nankai-3).